The primary structure comprises 457 residues: UDP-N-acetylmuramate--L-alanyl-gamma-D-glutamyl-meso-2,6-diaminoheptandioate ligase (457 aa).

G110–T116 lines the ATP pocket.

The protein belongs to the MurCDEF family. Mpl subfamily. Requires Mg(2+) as cofactor.

It localises to the secreted. It catalyses the reaction UDP-N-acetyl-alpha-D-muramate + L-alanyl-gamma-D-glutamyl-meso-2,6-diaminopimelate + ATP = UDP-N-acetyl-alpha-D-muramoyl-L-alanyl-gamma-D-glutamyl-meso-2,6-diaminopimelate + ADP + phosphate + H(+). It functions in the pathway cell wall biogenesis; peptidoglycan recycling. Reutilizes the intact tripeptide L-alanyl-gamma-D-glutamyl-meso-diaminopimelate by linking it to UDP-N-acetylmuramate. The enzyme can also use the tetrapeptide L-alanyl-gamma-D-glutamyl-meso-2,6-diaminoheptanedioyl-D-alanine or the pentapeptide L-alanyl-gamma-D-glutamyl-meso-2,6-diaminoheptandioyl-D-alanyl-D-alanine in vivo and in vitro. This chain is UDP-N-acetylmuramate--L-alanyl-gamma-D-glutamyl-meso-2,6-diaminoheptandioate ligase, found in Escherichia coli (strain K12).